We begin with the raw amino-acid sequence, 453 residues long: Pup--protein ligase (453 aa).

Glutamate 9 contributes to the Mg(2+) binding site. Arginine 53 provides a ligand contact to ATP. Tyrosine 55 contacts Mg(2+). Aspartate 57 serves as the catalytic Proton acceptor. Position 63 (glutamate 63) interacts with Mg(2+). Threonine 66 and tryptophan 420 together coordinate ATP.

This sequence belongs to the Pup ligase/Pup deamidase family. Pup-conjugating enzyme subfamily.

It carries out the reaction ATP + [prokaryotic ubiquitin-like protein]-L-glutamate + [protein]-L-lysine = ADP + phosphate + N(6)-([prokaryotic ubiquitin-like protein]-gamma-L-glutamyl)-[protein]-L-lysine.. It functions in the pathway protein degradation; proteasomal Pup-dependent pathway. Its pathway is protein modification; protein pupylation. Catalyzes the covalent attachment of the prokaryotic ubiquitin-like protein modifier Pup to the proteasomal substrate proteins, thereby targeting them for proteasomal degradation. This tagging system is termed pupylation. The ligation reaction involves the side-chain carboxylate of the C-terminal glutamate of Pup and the side-chain amino group of a substrate lysine. The sequence is that of Pup--protein ligase from Streptomyces avermitilis (strain ATCC 31267 / DSM 46492 / JCM 5070 / NBRC 14893 / NCIMB 12804 / NRRL 8165 / MA-4680).